A 430-amino-acid polypeptide reads, in one-letter code: MTSVVVVGTQWGDEGKGKITDFLSADAEVIARYQGGDNAGHTIVIDGKKFKLHLIPSGIFFPQKISVIGNGVVVNPKSLVKELAYLHDEGVTTDNLRISDRAHVILPYHIQLDQLQEDAKGDNKIGTTIKGIGPAYMDKAARVGIRIADLLDKDIFAERLRINLAEKNRLFEKMYDSTPLGFDAIFEEYYAYGQEIKQYVTDTSVILNDALDAGKRVLFEGAQGVMLDIDQGTYPFVTSSNPVAGGVTIGSGVGPSKINKVVGVCKAYTSRVGDGPFPTELFDEVGERIREVGHEYGTTTGRPRRVGWFDSVVMRHSRRVSGITNLSLNSIDVLSGLDTVKICVAYDLDGKRIDYYPASLEQLKRCKPIYEELPGWQEDITGVRSLDELPENARNYVRRVGELVGVRISTFSVGPGREQTNILESVWASI.

Residues 12–18 (GDEGKGK) and 40–42 (GHT) each bind GTP. Aspartate 13 acts as the Proton acceptor in catalysis. Residues aspartate 13 and glycine 40 each coordinate Mg(2+). Residues 13 to 16 (DEGK), 38 to 41 (NAGH), threonine 128, arginine 142, glutamine 223, threonine 238, and arginine 302 each bind IMP. Histidine 41 functions as the Proton donor in the catalytic mechanism. 298–304 (TTTGRPR) contacts substrate. Residues arginine 304, 330–332 (SID), and 412–414 (SVG) each bind GTP.

This sequence belongs to the adenylosuccinate synthetase family. In terms of assembly, homodimer. It depends on Mg(2+) as a cofactor.

The protein resides in the cytoplasm. It carries out the reaction IMP + L-aspartate + GTP = N(6)-(1,2-dicarboxyethyl)-AMP + GDP + phosphate + 2 H(+). Its pathway is purine metabolism; AMP biosynthesis via de novo pathway; AMP from IMP: step 1/2. In terms of biological role, plays an important role in the de novo pathway of purine nucleotide biosynthesis. Catalyzes the first committed step in the biosynthesis of AMP from IMP. This Streptococcus pyogenes serotype M12 (strain MGAS9429) protein is Adenylosuccinate synthetase.